The sequence spans 172 residues: Ribosome maturation factor RimM (172 aa).

A PRC barrel domain is found at 100–172 (PGEYYRVDLV…RIVVDWDPGF (73 aa)).

It belongs to the RimM family. As to quaternary structure, binds ribosomal protein uS19.

It is found in the cytoplasm. In terms of biological role, an accessory protein needed during the final step in the assembly of 30S ribosomal subunit, possibly for assembly of the head region. Essential for efficient processing of 16S rRNA. May be needed both before and after RbfA during the maturation of 16S rRNA. It has affinity for free ribosomal 30S subunits but not for 70S ribosomes. The protein is Ribosome maturation factor RimM of Methylococcus capsulatus (strain ATCC 33009 / NCIMB 11132 / Bath).